A 313-amino-acid polypeptide reads, in one-letter code: Porphobilinogen deaminase (313 aa).

Cys242 bears the S-(dipyrrolylmethanemethyl)cysteine mark.

It belongs to the HMBS family. Monomer. Dipyrromethane is required as a cofactor.

It carries out the reaction 4 porphobilinogen + H2O = hydroxymethylbilane + 4 NH4(+). It participates in porphyrin-containing compound metabolism; protoporphyrin-IX biosynthesis; coproporphyrinogen-III from 5-aminolevulinate: step 2/4. Tetrapolymerization of the monopyrrole PBG into the hydroxymethylbilane pre-uroporphyrinogen in several discrete steps. The chain is Porphobilinogen deaminase from Pseudomonas aeruginosa (strain LESB58).